The sequence spans 286 residues: Release factor glutamine methyltransferase (286 aa).

S-adenosyl-L-methionine contacts are provided by residues 122 to 126, D145, W173, and N188; that span reads GTGTG. 188 to 191 is a substrate binding site; sequence NPPY.

It belongs to the protein N5-glutamine methyltransferase family. PrmC subfamily.

The enzyme catalyses L-glutaminyl-[peptide chain release factor] + S-adenosyl-L-methionine = N(5)-methyl-L-glutaminyl-[peptide chain release factor] + S-adenosyl-L-homocysteine + H(+). Its function is as follows. Methylates the class 1 translation termination release factors RF1/PrfA and RF2/PrfB on the glutamine residue of the universally conserved GGQ motif. The protein is Release factor glutamine methyltransferase of Shewanella oneidensis (strain ATCC 700550 / JCM 31522 / CIP 106686 / LMG 19005 / NCIMB 14063 / MR-1).